Reading from the N-terminus, the 264-residue chain is Phosphonoacetaldehyde hydrolase (264 aa).

Catalysis depends on D9, which acts as the Nucleophile. D9 and A11 together coordinate Mg(2+). K50 acts as the Schiff-base intermediate with substrate in catalysis. A Mg(2+)-binding site is contributed by D183.

Belongs to the HAD-like hydrolase superfamily. PhnX family. As to quaternary structure, homodimer. It depends on Mg(2+) as a cofactor.

It carries out the reaction phosphonoacetaldehyde + H2O = acetaldehyde + phosphate + H(+). Involved in phosphonate degradation. This is Phosphonoacetaldehyde hydrolase from Bacillus cereus (strain ATCC 10987 / NRS 248).